Here is a 267-residue protein sequence, read N- to C-terminus: Ribosomal RNA large subunit methyltransferase E (267 aa).

S-adenosyl-L-methionine-binding residues include Gly50, Trp52, Asp68, Asp84, and Asp109. Lys149 serves as the catalytic Proton acceptor. The TRAM domain maps to 196-255 (PLKIDDKFDVTIKKIGAKGNGIAFVEDFVVFMQDEVKKGENVRIKIVDVKPEFAFAIVIG).

Belongs to the class I-like SAM-binding methyltransferase superfamily. RNA methyltransferase RlmE family.

It localises to the cytoplasm. The enzyme catalyses uridine(2552) in 23S rRNA + S-adenosyl-L-methionine = 2'-O-methyluridine(2552) in 23S rRNA + S-adenosyl-L-homocysteine + H(+). Functionally, specifically methylates the uridine in position 2552 of 23S rRNA at the 2'-O position of the ribose in the fully assembled 50S ribosomal subunit. This Methanococcoides burtonii (strain DSM 6242 / NBRC 107633 / OCM 468 / ACE-M) protein is Ribosomal RNA large subunit methyltransferase E.